Here is a 367-residue protein sequence, read N- to C-terminus: Leucine-rich repeat-containing protein 28 (367 aa).

9 LRR repeats span residues 16 to 36 (KHKN…ELLK), 42 to 63 (YLER…LAQK), 66 to 87 (NLVE…IGSL), 89 to 111 (KLQS…GRLK), 112 to 133 (SLRH…IGKL), 135 to 156 (ELQT…LYQC), 158 to 179 (SLQY…LCQL), 181 to 202 (SLNE…LGRS), and 204 to 226 (ELQY…LYNK).

In Xenopus tropicalis (Western clawed frog), this protein is Leucine-rich repeat-containing protein 28 (lrrc28).